The primary structure comprises 152 residues: UPF0266 membrane protein YobD (152 aa).

A run of 3 helical transmembrane segments spans residues 6 to 26, 45 to 65, and 67 to 87; these read LVLI…QFIM, IDSV…VTNH, and ALIT…IFWI.

The protein belongs to the UPF0266 family.

It is found in the cell inner membrane. In Escherichia coli O127:H6 (strain E2348/69 / EPEC), this protein is UPF0266 membrane protein YobD.